An 818-amino-acid polypeptide reads, in one-letter code: H(+)/Cl(-) exchange transporter 3 (818 aa).

Residues 1-125 (MESEQLFHRG…WEMTKSLYDA (125 aa)) lie on the Cytoplasmic side of the membrane. 3 consecutive short sequence motifs (di-leucine internalization motif; mediates targeting to late endosome and lysosome membranes) follow at residues 28–29 (LL), 46–47 (LL), and 71–75 (LLDLL). The chain crosses the membrane as a helical span at residues 126–163 (WSGWLVVTLTGLASGALAGLIDIAADWMTDLKEGICLS). Asn177 carries N-linked (GlcNAc...) asparagine glycosylation. Residues 209-232 (MNYIMYIFWALSFAFLAVSLVKVF) traverse the membrane as a helical segment. The short motif at 238-242 (GSGIP) is the Selectivity filter part_1 element. A chloride-binding site is contributed by Ser239. Positions 241-248 (IPEIKTIL) form an intramembrane region, helical. 2 helical membrane-spanning segments follow: residues 258-276 (GKWT…VASG) and 282-301 (EGPL…YLFP). The short motif at 280-284 (GKEGP) is the Selectivity filter part_2 element. 2 intramembrane regions (helical) span residues 313–325 (VLSA…VSVA) and 329–337 (PIGGVLFSL). Transmembrane regions (helical) follow at residues 349–367 (LWRS…RSIN), 391–416 (FPFI…AWCR), and 423–443 (FGKY…VIAF). Residues Asn451 and Asn479 are each glycosylated (N-linked (GlcNAc...) asparagine). 2 consecutive transmembrane segments (helical) span residues 500–520 (IWQL…TFGI) and 525–544 (GLFI…VGIA). A Selectivity filter part_3 motif is present at residues 525-529 (GLFIP). Residue Phe527 participates in chloride binding. 2 intramembrane regions (helical) span residues 572 to 586 (GLYA…LGGV) and 590 to 601 (TVSLVVIVFELT). An intramembrane region (note=Loop between two helices) is located at residues 602-605 (GGLE). The helical transmembrane segment at 606–624 (YIVPLMAAVMTSKWVGDAF) threads the bilayer. The Cytoplasmic segment spans residues 625–818 (GREGIYEAHI…NQDPASIMFN (194 aa)). Tyr630 lines the chloride pocket. CBS domains are found at residues 658–722 (MRPR…ARKK) and 755–812 (LDMS…NQDP). Residues 689-691 (YNG) and 796-799 (TKKD) contribute to the ATP site.

It belongs to the chloride channel (TC 2.A.49) family. ClC-3/CLCN3 subfamily. Monomer and homodimer. Forms heterodimers with CLCN4. In terms of assembly, interacts with GOPC, PDZK1 and NHERF1/EBP50. N-glycosylated. In terms of tissue distribution, expressed primarily in tissues derived from neuroectoderm. Within the brain, its expression is particularly evident in the hippocampus, olfactory cortex, and olfactory bulb. Highly expressed in aortic and coronary vascular smooth muscle cells, and aortic endothelial cells. Also expressed in tracheal and alveolar epithelial cells, and intima and media of the pulmonary vessels. Expressed in bronchus and colon (at protein level).

It is found in the early endosome membrane. Its subcellular location is the late endosome membrane. The protein localises to the lysosome membrane. The protein resides in the cell membrane. It localises to the golgi apparatus membrane. It is found in the cell projection. Its subcellular location is the ruffle membrane. Its function is as follows. Strongly outwardly rectifying, electrogenic H(+)/Cl(-)exchanger which mediates the exchange of chloride ions against protons. The CLC channel family contains both chloride channels and proton-coupled anion transporters that exchange chloride or another anion for protons. The presence of conserved gating glutamate residues is typical for family members that function as antiporters. Functionally, strongly outwardly rectifying, electrogenic H(+)/Cl(-)exchanger which mediates the exchange of chloride ions against protons. The sequence is that of H(+)/Cl(-) exchange transporter 3 (CLCN3) from Homo sapiens (Human).